The primary structure comprises 480 residues: Proline--tRNA ligase (480 aa).

Belongs to the class-II aminoacyl-tRNA synthetase family. ProS type 3 subfamily. Homodimer.

The protein resides in the cytoplasm. The enzyme catalyses tRNA(Pro) + L-proline + ATP = L-prolyl-tRNA(Pro) + AMP + diphosphate. Functionally, catalyzes the attachment of proline to tRNA(Pro) in a two-step reaction: proline is first activated by ATP to form Pro-AMP and then transferred to the acceptor end of tRNA(Pro). The protein is Proline--tRNA ligase of Chloroflexus aurantiacus (strain ATCC 29364 / DSM 637 / Y-400-fl).